Consider the following 138-residue polypeptide: Cysteine desulfuration protein SufE (138 aa).

Cys-51 (cysteine persulfide intermediate) is an active-site residue.

This sequence belongs to the SufE family. Homodimer. Interacts with SufS.

The protein localises to the cytoplasm. It functions in the pathway cofactor biosynthesis; iron-sulfur cluster biosynthesis. Functionally, participates in cysteine desulfuration mediated by SufS. Cysteine desulfuration mobilizes sulfur from L-cysteine to yield L-alanine and constitutes an essential step in sulfur metabolism for biosynthesis of a variety of sulfur-containing biomolecules. Functions as a sulfur acceptor for SufS, by mediating the direct transfer of the sulfur atom from the S-sulfanylcysteine of SufS, an intermediate product of cysteine desulfuration process. The protein is Cysteine desulfuration protein SufE of Escherichia coli (strain K12 / MC4100 / BW2952).